Consider the following 255-residue polypeptide: 4-hydroxy-tetrahydrodipicolinate reductase (255 aa).

Residues 8-13, 88-90, and 112-115 contribute to the NAD(+) site; these read GANGRV, GTT, and ATNM. H144 (proton donor/acceptor) is an active-site residue. (S)-2,3,4,5-tetrahydrodipicolinate is bound at residue H145. K148 functions as the Proton donor in the catalytic mechanism. Position 154-155 (154-155) interacts with (S)-2,3,4,5-tetrahydrodipicolinate; that stretch reads GT.

The protein belongs to the DapB family.

The protein localises to the cytoplasm. It carries out the reaction (S)-2,3,4,5-tetrahydrodipicolinate + NAD(+) + H2O = (2S,4S)-4-hydroxy-2,3,4,5-tetrahydrodipicolinate + NADH + H(+). The catalysed reaction is (S)-2,3,4,5-tetrahydrodipicolinate + NADP(+) + H2O = (2S,4S)-4-hydroxy-2,3,4,5-tetrahydrodipicolinate + NADPH + H(+). Its pathway is amino-acid biosynthesis; L-lysine biosynthesis via DAP pathway; (S)-tetrahydrodipicolinate from L-aspartate: step 4/4. In terms of biological role, catalyzes the conversion of 4-hydroxy-tetrahydrodipicolinate (HTPA) to tetrahydrodipicolinate. In Sulfurimonas denitrificans (strain ATCC 33889 / DSM 1251) (Thiomicrospira denitrificans (strain ATCC 33889 / DSM 1251)), this protein is 4-hydroxy-tetrahydrodipicolinate reductase.